The following is a 458-amino-acid chain: Probable M18 family aminopeptidase 1 (458 aa).

Residues His-95, His-170, and His-434 each contribute to the Zn(2+) site.

Belongs to the peptidase M18 family. Zn(2+) serves as cofactor.

The protein is Probable M18 family aminopeptidase 1 of Borrelia garinii subsp. bavariensis (strain ATCC BAA-2496 / DSM 23469 / PBi) (Borreliella bavariensis).